We begin with the raw amino-acid sequence, 313 residues long: tRNA pseudouridine synthase B (313 aa).

Catalysis depends on Asp48, which acts as the Nucleophile.

The protein belongs to the pseudouridine synthase TruB family. Type 1 subfamily.

It carries out the reaction uridine(55) in tRNA = pseudouridine(55) in tRNA. Its function is as follows. Responsible for synthesis of pseudouridine from uracil-55 in the psi GC loop of transfer RNAs. The protein is tRNA pseudouridine synthase B of Saccharophagus degradans (strain 2-40 / ATCC 43961 / DSM 17024).